We begin with the raw amino-acid sequence, 86 residues long: Anti-adapter protein IraP (86 aa).

A coiled-coil region spans residues 1-36; it reads MKNLIAELLLKLAQKEEESKELCAQVEALEIIVTAM.

This sequence belongs to the IraP family. In terms of assembly, interacts with RssB.

Its subcellular location is the cytoplasm. Its function is as follows. Inhibits RpoS proteolysis by regulating RssB activity, thereby increasing the stability of the sigma stress factor RpoS especially during phosphate starvation, but also in stationary phase and during nitrogen starvation. Its effect on RpoS stability is due to its interaction with RssB, which probably blocks the interaction of RssB with RpoS, and the consequent delivery of the RssB-RpoS complex to the ClpXP protein degradation pathway. This chain is Anti-adapter protein IraP, found in Shigella boydii serotype 18 (strain CDC 3083-94 / BS512).